The chain runs to 292 residues: Elongation factor Ts (292 aa).

The segment at threonine 80 to valine 83 is involved in Mg(2+) ion dislocation from EF-Tu.

Belongs to the EF-Ts family.

The protein localises to the cytoplasm. Its function is as follows. Associates with the EF-Tu.GDP complex and induces the exchange of GDP to GTP. It remains bound to the aminoacyl-tRNA.EF-Tu.GTP complex up to the GTP hydrolysis stage on the ribosome. This Lactiplantibacillus plantarum (strain ATCC BAA-793 / NCIMB 8826 / WCFS1) (Lactobacillus plantarum) protein is Elongation factor Ts.